We begin with the raw amino-acid sequence, 203 residues long: RNA chaperone ProQ (203 aa).

The tract at residues 111–138 (KAKRQALAPKKPAKKVAPKRAPAVKKER) is disordered.

It belongs to the ProQ family.

The protein localises to the cytoplasm. RNA chaperone with significant RNA binding, RNA strand exchange and RNA duplexing activities. The chain is RNA chaperone ProQ from Shewanella frigidimarina (strain NCIMB 400).